A 415-amino-acid chain; its full sequence is Multifunctional CCA protein (415 aa).

2 residues coordinate ATP: G8 and R11. CTP contacts are provided by G8 and R11. Mg(2+) is bound by residues E21 and D23. ATP-binding residues include R91, R137, and R140. 3 residues coordinate CTP: R91, R137, and R140. The HD domain occupies 228-329 (AGTHTLMALD…VELFEGLDLF (102 aa)).

Belongs to the tRNA nucleotidyltransferase/poly(A) polymerase family. Bacterial CCA-adding enzyme type 1 subfamily. In terms of assembly, monomer. Can also form homodimers and oligomers. Mg(2+) serves as cofactor. Ni(2+) is required as a cofactor.

It carries out the reaction a tRNA precursor + 2 CTP + ATP = a tRNA with a 3' CCA end + 3 diphosphate. It catalyses the reaction a tRNA with a 3' CCA end + 2 CTP + ATP = a tRNA with a 3' CCACCA end + 3 diphosphate. Catalyzes the addition and repair of the essential 3'-terminal CCA sequence in tRNAs without using a nucleic acid template. Adds these three nucleotides in the order of C, C, and A to the tRNA nucleotide-73, using CTP and ATP as substrates and producing inorganic pyrophosphate. tRNA 3'-terminal CCA addition is required both for tRNA processing and repair. Also involved in tRNA surveillance by mediating tandem CCA addition to generate a CCACCA at the 3' terminus of unstable tRNAs. While stable tRNAs receive only 3'-terminal CCA, unstable tRNAs are marked with CCACCA and rapidly degraded. This chain is Multifunctional CCA protein, found in Halorhodospira halophila (strain DSM 244 / SL1) (Ectothiorhodospira halophila (strain DSM 244 / SL1)).